Reading from the N-terminus, the 403-residue chain is Phosphoglycerate kinase (403 aa).

Substrate is bound by residues 21–23 (DFN), arginine 36, 59–62 (HLGR), arginine 119, and arginine 159. ATP contacts are provided by residues lysine 214, glycine 301, glutamate 332, and 359-362 (GGDS).

It belongs to the phosphoglycerate kinase family. As to quaternary structure, monomer.

It is found in the cytoplasm. The enzyme catalyses (2R)-3-phosphoglycerate + ATP = (2R)-3-phospho-glyceroyl phosphate + ADP. The protein operates within carbohydrate degradation; glycolysis; pyruvate from D-glyceraldehyde 3-phosphate: step 2/5. This Lactobacillus delbrueckii subsp. bulgaricus (strain ATCC 11842 / DSM 20081 / BCRC 10696 / JCM 1002 / NBRC 13953 / NCIMB 11778 / NCTC 12712 / WDCM 00102 / Lb 14) protein is Phosphoglycerate kinase.